The following is a 1170-amino-acid chain: Anion exchange protein 3 (1170 aa).

At 1–656 (MGRSYNEKDF…DLKDALDTQC (656 aa)) the chain is on the cytoplasmic side. Disordered regions lie at residues 17–96 (FHHT…PQLS), 112–167 (FHME…TTRG), and 239–267 (HLVKKSSRCQLPRSSNGSPPLSSLKRRKR). Over residues 32-53 (RFRKRVLSMDRRRKRKRKKKKT) the composition is skewed to basic residues. Residues 67 to 76 (VDEEEAESEI) show a composition bias toward acidic residues. The segment covering 246–259 (RCQLPRSSNGSPPL) has biased composition (polar residues). A run of 5 helical transmembrane segments spans residues 657–677 (IAAVIFIYFAALSPTITFGGL), 702–722 (FSLLAGQPLLIIGFSGPLLVF), 744–764 (IGFWLIFIVLVIVAAEGSFLV), 774–794 (IFAFLISLIFIYETFSKLIKV), and 828–848 (PNTALLSMVLMMGTFFTAFFL). Residues 657–1170 (IAAVIFIYFA…DEYNEIHMLV (514 aa)) are membrane (anion exchange). Topologically, residues 849–863 (RKLRNSRFLGGKVRR) are cytoplasmic. The next 5 membrane-spanning stretches (helical) occupy residues 864 to 884 (VIGDFGIPISILISVLVDILI), 919 to 939 (FPVWMMGASVIPALLVFILIF), 966 to 986 (LLLIVTLGAICPLFGLPWLTA), 1020 to 1063 (RVTG…LTGI), and 1104 to 1124 (IVLLWVVKSTVASLAFPFILI).

Belongs to the anion exchanger (TC 2.A.31) family. Widely expressed at low levels.

It is found in the cell membrane. It carries out the reaction hydrogencarbonate(in) + chloride(out) = hydrogencarbonate(out) + chloride(in). In terms of biological role, sodium-independent anion exchanger which mediates the electroneutral exchange of chloride for bicarbonate ions across the cell membrane. May be involved in the regulation of intracellular pH, and the modulation of cardiac action potential. This is Anion exchange protein 3 from Danio rerio (Zebrafish).